The sequence spans 239 residues: Aspartate/glutamate leucyltransferase (239 aa).

Belongs to the R-transferase family. Bpt subfamily.

The protein localises to the cytoplasm. The enzyme catalyses N-terminal L-glutamyl-[protein] + L-leucyl-tRNA(Leu) = N-terminal L-leucyl-L-glutamyl-[protein] + tRNA(Leu) + H(+). It catalyses the reaction N-terminal L-aspartyl-[protein] + L-leucyl-tRNA(Leu) = N-terminal L-leucyl-L-aspartyl-[protein] + tRNA(Leu) + H(+). In terms of biological role, functions in the N-end rule pathway of protein degradation where it conjugates Leu from its aminoacyl-tRNA to the N-termini of proteins containing an N-terminal aspartate or glutamate. The polypeptide is Aspartate/glutamate leucyltransferase (Campylobacter jejuni subsp. jejuni serotype O:23/36 (strain 81-176)).